Reading from the N-terminus, the 236-residue chain is Small ribosomal subunit protein uS2c (236 aa).

Belongs to the universal ribosomal protein uS2 family.

It localises to the plastid. The protein localises to the chloroplast. The chain is Small ribosomal subunit protein uS2c (rps2) from Daucus carota (Wild carrot).